A 146-amino-acid polypeptide reads, in one-letter code: Chorion class A protein Ld3/Ld29 (146 aa).

Positions 1 to 21 are cleaved as a signal peptide; the sequence is MNTFALLSVFIQACLVQSVFS.

The protein belongs to the chorion protein family.

Its function is as follows. This protein is one of many from the eggshell of the gypsy moth. The polypeptide is Chorion class A protein Ld3/Ld29 (Lymantria dispar (Gypsy moth)).